Here is a 357-residue protein sequence, read N- to C-terminus: RNA 3'-terminal phosphate cyclase (357 aa).

ATP contacts are provided by residues Gln102 and 293–296 (HMGD). The Tele-AMP-histidine intermediate role is filled by His319.

It belongs to the RNA 3'-terminal cyclase family. Type 1 subfamily.

It is found in the cytoplasm. It carries out the reaction a 3'-end 3'-phospho-ribonucleotide-RNA + ATP = a 3'-end 2',3'-cyclophospho-ribonucleotide-RNA + AMP + diphosphate. Catalyzes the conversion of 3'-phosphate to a 2',3'-cyclic phosphodiester at the end of RNA. The mechanism of action of the enzyme occurs in 3 steps: (A) adenylation of the enzyme by ATP; (B) transfer of adenylate to an RNA-N3'P to produce RNA-N3'PP5'A; (C) and attack of the adjacent 2'-hydroxyl on the 3'-phosphorus in the diester linkage to produce the cyclic end product. The biological role of this enzyme is unknown but it is likely to function in some aspects of cellular RNA processing. This Desulfurococcus amylolyticus (strain DSM 18924 / JCM 16383 / VKM B-2413 / 1221n) (Desulfurococcus kamchatkensis) protein is RNA 3'-terminal phosphate cyclase.